Consider the following 149-residue polypeptide: Arginine repressor (149 aa).

Belongs to the ArgR family.

The protein resides in the cytoplasm. It participates in amino-acid biosynthesis; L-arginine biosynthesis [regulation]. Functionally, regulates arginine biosynthesis genes. The protein is Arginine repressor of Oceanobacillus iheyensis (strain DSM 14371 / CIP 107618 / JCM 11309 / KCTC 3954 / HTE831).